The chain runs to 405 residues: Accessory Sec system protein translocase subunit SecY2 (405 aa).

The next 10 helical transmembrane spans lie at 14–34 (MCTL…LPFV), 65–85 (LFSI…MFSF), 104–124 (MYLT…NLPV), 131–151 (FLVF…LVWL), 156–176 (ATIG…ASLP), 190–210 (LGLL…VVLF), 243–263 (GMPY…LLLL), 285–305 (PLWI…FAFV), 343–363 (FALI…LFVL), and 368–388 (LLKV…LFTI).

This sequence belongs to the SecY/SEC61-alpha family. SecY2 subfamily. Component of the accessory SecA2/SecY2 protein translocase complex required to export cell wall proteins. May form heterotrimers with SecE and SecG subunits.

It is found in the cell membrane. In terms of biological role, part of the accessory SecA2/SecY2 system specifically required for export of possible cell wall proteins. The central subunit of a protein translocation channel. The chain is Accessory Sec system protein translocase subunit SecY2 from Streptococcus oralis (strain Uo5).